The following is a 131-amino-acid chain: Transcriptional activatory protein CaiF (131 aa).

In terms of biological role, potential transcriptional activator of carnitine metabolism. The chain is Transcriptional activatory protein CaiF (caiF) from Escherichia coli (strain K12).